The following is a 439-amino-acid chain: Hemagglutinin-esterase (439 aa).

A signal peptide spans M1 to A22. An esterase domain 1 region spans residues T12–A132. Residues L23 to V407 are Virion surface-facing. Catalysis depends on S45, which acts as the Nucleophile. C49 and C70 are disulfide-bonded. 5 N-linked (GlcNAc...) asparagine; by host glycosylation sites follow: N94, N152, N196, N246, and N316. C118 and C167 are joined by a disulfide. The receptor binding stretch occupies residues R133–Y281. Disulfide bonds link C202–C291 and C210–C264. The tract at residues L282–F395 is esterase domain 2. A disulfide bridge connects residues C322 and C327. 2 N-linked (GlcNAc...) asparagine; by host glycosylation sites follow: N331 and N337. Residues D342 and H345 each act as charge relay system in the active site. N-linked (GlcNAc...) asparagine; by host glycans are attached at residues N360 and N374. A disulfide bridge connects residues C363 and C387. Residues I408–F428 form a helical membrane-spanning segment. Residues M429–A439 are Intravirion-facing.

It belongs to the influenza type C/coronaviruses hemagglutinin-esterase family. As to quaternary structure, homodimer; disulfide-linked. Forms a complex with the M protein in the pre-Golgi. Associates then with S-M complex to form a ternary complex S-M-HE. Post-translationally, N-glycosylated in the host RER.

The protein localises to the virion membrane. It localises to the host cell membrane. It catalyses the reaction N-acetyl-9-O-acetylneuraminate + H2O = N-acetylneuraminate + acetate + H(+). The enzyme catalyses N-acetyl-4-O-acetylneuraminate + H2O = N-acetylneuraminate + acetate + H(+). Structural protein that makes short spikes at the surface of the virus. Contains receptor binding and receptor-destroying activities. Mediates de-O-acetylation of N-acetyl-4-O-acetylneuraminic acid, which is probably the receptor determinant recognized by the virus on the surface of erythrocytes and susceptible cells. This receptor-destroying activity is important for virus release as it probably helps preventing self-aggregation and ensures the efficient spread of the progeny virus from cell to cell. May serve as a secondary viral attachment protein for initiating infection, the spike protein being the major one. May become a target for both the humoral and the cellular branches of the immune system. This Puffinosis coronavirus (PV) protein is Hemagglutinin-esterase.